We begin with the raw amino-acid sequence, 392 residues long: Caveolae-associated protein 1 (392 aa).

Position 1 is an N-acetylmethionine (Met1). A compositionally biased stretch (basic and acidic residues) spans 1 to 10; sequence MEDVTLHIVE. The segment at 1–45 is disordered; that stretch reads MEDVTLHIVERPYSGFPDASSEGPEPTQGEARATEEPSGTGSDEL. The required for homotrimerization and for interaction with CAVIN2 and CAVIN3 stretch occupies residues 1 to 100; that stretch reads MEDVTLHIVE…IQGELSKLGK (100 aa). Phosphoserine occurs at positions 21 and 38. Position 40 is a phosphothreonine (Thr40). A phosphoserine mark is found at Ser42 and Ser48. Residues 54–64 form a nuclear export signal region; that stretch reads VLVLSLLDKII. The interval 55–77 is leucine-zipper 1; it reads LVLSLLDKIIGAVDQIQLTQAQL. Lys118 participates in a covalent cross-link: Glycyl lysine isopeptide (Lys-Gly) (interchain with G-Cter in SUMO2). Position 120 is a phosphoserine (Ser120). A Glycyl lysine isopeptide (Lys-Gly) (interchain with G-Cter in SUMO2) cross-link involves residue Lys124. The segment at 138–154 is nuclear localization signal; sequence KKLEVNEAELLRRRNFK. Tyr158 is modified (phosphotyrosine). Residue Lys163 forms a Glycyl lysine isopeptide (Lys-Gly) (interchain with G-Cter in SUMO1); alternate linkage. Lys163 is covalently cross-linked (Glycyl lysine isopeptide (Lys-Gly) (interchain with G-Cter in SUMO2); alternate). A Glycyl lysine isopeptide (Lys-Gly) (interchain with G-Cter in SUMO2) cross-link involves residue Lys167. The segment at 168 to 188 is leucine-zipper 2; sequence LSVSKSLKESEALPEKEGDEL. Phosphoserine is present on residues Ser169 and Ser171. A Glycyl lysine isopeptide (Lys-Gly) (interchain with G-Cter in SUMO2) cross-link involves residue Lys172. Phosphoserine is present on residues Ser173 and Ser177. The span at 173–183 shows a compositional bias: basic and acidic residues; sequence SLKESEALPEK. Residues 173–197 form a disordered region; the sequence is SLKESEALPEKEGDELGEGERPEDD. The span at 184–197 shows a compositional bias: acidic residues; that stretch reads EGDELGEGERPEDD. At Thr198 the chain carries Phosphothreonine. Residues 201-284 adopt a coiled-coil conformation; sequence IELSSDEAVE…RMNKLGTRLV (84 aa). Phosphoserine is present on residues Ser204 and Ser205. The interval 235–251 is nuclear localization signal; sequence KKAFSKEKMEKTKVRTR. A leucine-zipper 3 region spans residues 259–299; it reads LKTKENLEKTRHTLEKRMNKLGTRLVPVERREKLKTSRDKL. A Phosphoserine modification is found at Ser302. Residue Thr304 is modified to Phosphothreonine. Residue Tyr310 is modified to Phosphotyrosine. Lys328 participates in a covalent cross-link: Glycyl lysine isopeptide (Lys-Gly) (interchain with G-Cter in SUMO2). Residues 347-367 form a disordered region; it reads GPEDDEVGAERGEATDLLRGS. Ser367, Ser368, Ser381, Ser389, and Ser391 each carry phosphoserine.

It belongs to the CAVIN family. In terms of assembly, component of the CAVIN complex composed of CAVIN1, CAVIN2, CAVIN3 and CAVIN4. Homotrimer. Interacts with LIPE in the adipocyte cytoplasm. Interacts with RNA polymerase I subunit POLR1A/RPA1. Interacts with TTF1. Binds the 3' end of pre-rRNA. Interacts with transcription factor ZNF148. Interacts with CAV1, CAVIN2 and CAVIN3. Interacts with CAVIN4. Post-translationally, phosphorylated. Present in active and inactive forms. Changes in phosphorylation pattern may alter activity. Phosphorylation at Tyr-158 is essential for its function in the regulation of the ribosomal transcriptional activity. Monoubiquitinated. Expressed in the heart, stomach, adipose tissue and lung (at protein level). Expressed in testis, kidney, muscle, liver, spleen and brain.

Its subcellular location is the membrane. It localises to the caveola. The protein localises to the cell membrane. It is found in the microsome. The protein resides in the endoplasmic reticulum. Its subcellular location is the cytoplasm. It localises to the cytosol. The protein localises to the mitochondrion. It is found in the nucleus. Its function is as follows. Plays an important role in caveolae formation and organization. Essential for the formation of caveolae in all tissues. Core component of the CAVIN complex which is essential for recruitment of the complex to the caveolae in presence of calveolin-1 (CAV1). Essential for normal oligomerization of CAV1. Promotes ribosomal transcriptional activity in response to metabolic challenges in the adipocytes and plays an important role in the formation of the ribosomal transcriptional loop. Dissociates transcription complexes paused by DNA-bound TTF1, thereby releasing both RNA polymerase I and pre-RNA from the template. The caveolae biogenesis pathway is required for the secretion of proteins such as GASK1A. This Mus musculus (Mouse) protein is Caveolae-associated protein 1 (Cavin1).